Consider the following 674-residue polypeptide: MHHLLEQSADMATALLAGEKLRELILPGSQDDKAGALAALLLQLKLELPFDRVVTIGTVLVPILLVTLVFTKNFAEEPIYCYTPHNFTRDQALYARGYCWTELRDALPGVDASLWPSLFEHKFLPYALLAFAAIMYVPALGWEFLASTRLTSELNFLLQEIDNCYHRAAEGRAPKIEKQIQSKGPGITEREKREIIENAEKEKSPEQNLFEKYLERRGRSNFLAKLYLARHVLILLLSVVPISYLCTYYATQKQNEFTCALGASPDGPVGSAGPTVRVSCKLPSVQLQRIIAGVDIVLLCFMNLIILVNLIHLFIFRKSNFIFDKLHKVGIKTRRQWRRSQFCDINILAMFCNENRDHIKSLNRLDFITNESDLMYDNVVRQLLAALAQSNHDTTPTVRDSGIQTVDPSINPAEPEGSAEPPVVKRPRKKMKWIPTSNPLPQPFKEQLAIMRVENSKTEKPKPVRRKTATDTLIAPLLDAGARAAHHYKGSGGDTGPSSAPPAASEKKHTRHFSLDVHPYILGSKKAKTEAVPPALPASRSQEGGFLSQTEECGLGLAAAPTKDAPLPEKEIPYPTESALPSGGPFHVCSPPTASAAASLSPSSLGKADPLTILSRNATHPLLHISTLYEAREEEEGGPCAPSDMGDLLSIPPPQQILIATFEEPRTVVSTVEF.

The Cytoplasmic segment spans residues 11–53 (MATALLAGEKLRELILPGSQDDKAGALAALLLQLKLELPFDRV). The chain crosses the membrane as a helical span at residues 54-74 (VTIGTVLVPILLVTLVFTKNF). The Extracellular segment spans residues 75–125 (AEEPIYCYTPHNFTRDQALYARGYCWTELRDALPGVDASLWPSLFEHKFLP). An N-linked (GlcNAc...) asparagine glycan is attached at asparagine 86. The chain crosses the membrane as a helical span at residues 126-146 (YALLAFAAIMYVPALGWEFLA). Over 147–230 (STRLTSELNF…NFLAKLYLAR (84 aa)) the chain is Cytoplasmic. The helical transmembrane segment at 231 to 251 (HVLILLLSVVPISYLCTYYAT) threads the bilayer. Topologically, residues 252 to 295 (QKQNEFTCALGASPDGPVGSAGPTVRVSCKLPSVQLQRIIAGVD) are extracellular. Residues 296–316 (IVLLCFMNLIILVNLIHLFIF) form a helical membrane-spanning segment. Residues 317–674 (RKSNFIFDKL…PRTVVSTVEF (358 aa)) are Cytoplasmic-facing. Polar residues predominate over residues 394–408 (TTPTVRDSGIQTVDP). Disordered stretches follow at residues 394–426 (TTPT…VVKR) and 485–510 (AHHY…KKHT). Serine 590 and serine 601 each carry phosphoserine.

It belongs to the pannexin family. As to quaternary structure, forms PANX1/PANX2-heteromeric intercellular channels on coexpression in paired Xenopus oocytes. Does not form homomeric channels. Post-translationally, S-palmitoylated in neural stem and progenitor cells. In terms of processing, cleaved by CASP3 and CASP7 during apoptosis. Cleavage has no effect on it function. In terms of tissue distribution, expressed in the eye, thyroid, prostate, kidney and liver. Abundantly expressed in the CNS, including hippocampus, olfactory bulb, cortex, cerebellum. Not detected in the white matter.

The protein resides in the cell membrane. Its subcellular location is the golgi apparatus membrane. It localises to the endoplasmic reticulum membrane. Structural component of the gap junctions and the hemichannels. The sequence is that of Pannexin-2 (Panx2) from Rattus norvegicus (Rat).